Reading from the N-terminus, the 412-residue chain is Stachydrine N-demethylase (412 aa).

The Rieske domain occupies 45 to 150 (LYAVPVCQLA…LRNLDGLIYI (106 aa)). Positions 86, 88, 106, and 109 each coordinate [2Fe-2S] cluster. Fe cation contacts are provided by His204, His209, and Asp360.

It belongs to the bacterial ring-hydroxylating dioxygenase alpha subunit family. Homotrimer. The system is probably composed of an oxygenase subunit (Stc2) and two reductase subunits (Stc3 and Stc4). Requires [2Fe-2S] cluster as cofactor. It depends on Fe cation as a cofactor.

The enzyme catalyses L-proline betaine + NADH + O2 + H(+) = N-methyl-L-proline + formaldehyde + NAD(+) + H2O. It carries out the reaction L-proline betaine + NADPH + O2 + H(+) = N-methyl-L-proline + formaldehyde + NADP(+) + H2O. Its function is as follows. Monooxygenase involved in the catabolism of stachydrine (L-proline betaine), a source of carbon and nitrogen. Part of a Rieske-type oxygenase system that catalyzes the demethylation of stachydrine to produce N-methyl-L-proline (monomethylproline). Stc2 is the catalytic subunit. The chain is Stachydrine N-demethylase from Rhizobium meliloti (strain 1021) (Ensifer meliloti).